The primary structure comprises 197 residues: Histone chaperone asf1b-A (197 aa).

This sequence belongs to the ASF1 family. As to quaternary structure, interacts with histone H3 and histone H4.

It is found in the nucleus. Histone chaperone that facilitates histone deposition and histone exchange and removal during nucleosome assembly and disassembly. This chain is Histone chaperone asf1b-A (asf1ba), found in Danio rerio (Zebrafish).